Consider the following 170-residue polypeptide: Adenine phosphoribosyltransferase (170 aa).

Belongs to the purine/pyrimidine phosphoribosyltransferase family. In terms of assembly, homodimer.

The protein localises to the cytoplasm. The enzyme catalyses AMP + diphosphate = 5-phospho-alpha-D-ribose 1-diphosphate + adenine. It functions in the pathway purine metabolism; AMP biosynthesis via salvage pathway; AMP from adenine: step 1/1. Functionally, catalyzes a salvage reaction resulting in the formation of AMP, that is energically less costly than de novo synthesis. In Mycoplasmopsis pulmonis (strain UAB CTIP) (Mycoplasma pulmonis), this protein is Adenine phosphoribosyltransferase.